The sequence spans 104 residues: MSEFINVTVVREANVFFNGGVVSRTVIFPDGTKKTLGIMQPGEYTFNTGAPEIMEILTGELDLKLPGSDLWDRIGGGESFEVPANSSFTMKVLSLTDYCCSFLG.

It belongs to the nucleoside phosphorylase PpnP family.

It carries out the reaction a purine D-ribonucleoside + phosphate = a purine nucleobase + alpha-D-ribose 1-phosphate. The catalysed reaction is adenosine + phosphate = alpha-D-ribose 1-phosphate + adenine. The enzyme catalyses cytidine + phosphate = cytosine + alpha-D-ribose 1-phosphate. It catalyses the reaction guanosine + phosphate = alpha-D-ribose 1-phosphate + guanine. It carries out the reaction inosine + phosphate = alpha-D-ribose 1-phosphate + hypoxanthine. The catalysed reaction is thymidine + phosphate = 2-deoxy-alpha-D-ribose 1-phosphate + thymine. The enzyme catalyses uridine + phosphate = alpha-D-ribose 1-phosphate + uracil. It catalyses the reaction xanthosine + phosphate = alpha-D-ribose 1-phosphate + xanthine. In terms of biological role, catalyzes the phosphorolysis of diverse nucleosides, yielding D-ribose 1-phosphate and the respective free bases. Can use uridine, adenosine, guanosine, cytidine, thymidine, inosine and xanthosine as substrates. Also catalyzes the reverse reactions. This is Pyrimidine/purine nucleoside phosphorylase from Geobacter metallireducens (strain ATCC 53774 / DSM 7210 / GS-15).